Reading from the N-terminus, the 708-residue chain is Elongation factor G (708 aa).

Positions 8–290 (KRYRNIGISA…AVIQYLPAPM (283 aa)) constitute a tr-type G domain. Residues 17-24 (AHIDAGKT), 88-92 (DTPGH), and 142-145 (NKMD) each bind GTP.

The protein belongs to the TRAFAC class translation factor GTPase superfamily. Classic translation factor GTPase family. EF-G/EF-2 subfamily.

Its subcellular location is the cytoplasm. In terms of biological role, catalyzes the GTP-dependent ribosomal translocation step during translation elongation. During this step, the ribosome changes from the pre-translocational (PRE) to the post-translocational (POST) state as the newly formed A-site-bound peptidyl-tRNA and P-site-bound deacylated tRNA move to the P and E sites, respectively. Catalyzes the coordinated movement of the two tRNA molecules, the mRNA and conformational changes in the ribosome. This chain is Elongation factor G, found in Psychrobacter arcticus (strain DSM 17307 / VKM B-2377 / 273-4).